The chain runs to 595 residues: Laccase-18 (595 aa).

The N-terminal stretch at 1 to 29 (MEKLSTAASLFCVVVAATALAMAVVGGEA) is a signal peptide. 2 consecutive Plastocyanin-like domains span residues 37–153 (MVHE…PRNG) and 162–316 (KDVP…YAGA). Residues Asn42 and Asn48 are each glycosylated (N-linked (GlcNAc...) asparagine). Positions 87 and 89 each coordinate Cu cation. Asn121 is a glycosylation site (N-linked (GlcNAc...) asparagine). Cu cation-binding residues include His132 and His134. N-linked (GlcNAc...) asparagine glycosylation is found at Asn206, Asn345, Asn382, Asn402, Asn409, Asn439, and Asn470. Positions 429-571 (DFPVRPPRPF…ATAFIVEDGP (143 aa)) constitute a Plastocyanin-like 3 domain. Positions 488, 491, 493, 550, 551, 552, 556, and 561 each coordinate Cu cation. The disordered stretch occupies residues 570–595 (GPTPETSLPPPPPEFKRCGTNGLSQP).

The protein belongs to the multicopper oxidase family. Requires Cu cation as cofactor.

The protein resides in the secreted. The protein localises to the extracellular space. It localises to the apoplast. It carries out the reaction 4 hydroquinone + O2 = 4 benzosemiquinone + 2 H2O. Its function is as follows. Lignin degradation and detoxification of lignin-derived products. The chain is Laccase-18 (LAC18) from Oryza sativa subsp. japonica (Rice).